The primary structure comprises 1231 residues: Fanconi anemia group J protein homolog (1231 aa).

One can recognise a Helicase ATP-binding domain in the interval 11–448 (GGVKILFPCR…SDHEPLRAVC (438 aa)). 46 to 53 (SPTGSGKS) contributes to the ATP binding site. 2 disordered regions span residues 104 to 126 (TFSS…GASS) and 147 to 166 (QDDD…DEQL). Basic and acidic residues predominate over residues 152-166 (QTDRKRIRQSHDEQL). The short motif at 155 to 173 (RKRIRQSHDEQLQARKRRC) is the Nuclear localization signal element. [4Fe-4S] cluster-binding residues include Cys291, Cys304, Cys316, and Cys356. The DEAH box motif lies at 399–402 (DEAH). Residues 890–903 (SKNQQQRMQMSSTN) are compositionally biased toward polar residues. 3 disordered regions span residues 890–924 (SKNQ…PTSS), 936–956 (VSEF…PPEI), and 1195–1231 (GNEN…FFLD). Low complexity-rich tracts occupy residues 909-924 (SQGT…PTSS) and 940-954 (TQPT…TSPP). A compositionally biased stretch (basic and acidic residues) spans 1206 to 1217 (KGTEQKNRENRL).

It belongs to the DEAD box helicase family. DEAH subfamily. [4Fe-4S] cluster serves as cofactor.

The protein resides in the nucleus. The enzyme catalyses Couples ATP hydrolysis with the unwinding of duplex DNA at the replication fork by translocating in the 5'-3' direction. This creates two antiparallel DNA single strands (ssDNA). The leading ssDNA polymer is the template for DNA polymerase III holoenzyme which synthesizes a continuous strand.. The catalysed reaction is ATP + H2O = ADP + phosphate + H(+). Functionally, DNA-dependent helicase and 5' to 3' DNA helicase required for the maintenance of chromosomal stability. Involved in the repair of DNA double-strand breaks by homologous recombination. Involved in the repair of abasic sites at replication forks by promoting the degradation of DNA-protein cross-links: acts by catalyzing unfolding of HMCES DNA-protein cross-link via its helicase activity, exposing the underlying DNA and enabling cleavage of the DNA-protein adduct by the SPRTN metalloprotease. This chain is Fanconi anemia group J protein homolog (brip1.L), found in Xenopus laevis (African clawed frog).